Here is a 345-residue protein sequence, read N- to C-terminus: Protein TRIGALACTOSYLDIACYLGLYCEROL 3, chloroplastic (345 aa).

The N-terminal 46 residues, 1 to 46 (MLSLSCSSSSSSLLPPSLHYHGSSSVQSIVVPRRSLISFRRKVSCC), are a transit peptide targeting the chloroplast. Residues 85–336 (IECRDVYKSF…TNPIVQQFAT (252 aa)) enclose the ABC transporter domain. 117-124 (GPSGTGKS) is a binding site for ATP.

The protein belongs to the ABC transporter superfamily. ABCI family. As to quaternary structure, catalytic subunit of the TGD complex, a lipid translocator at the inner chloroplast envelope membrane made of TGD1, TGD2 and TGD3. Interacts with TGD1 and TGD2 with an overall subunit stoichiometry of 2 TGD1, 2 TGD3 and 8 to 12 TGD2. Interacts with TGD5.

It is found in the plastid. The protein localises to the chloroplast stroma. ATPase transporter involved in lipid transfer from the endoplasmic reticulum (ER) to plastids, and necessary for thylakoids formation. Not involved in transition metal transport pathways. The polypeptide is Protein TRIGALACTOSYLDIACYLGLYCEROL 3, chloroplastic (Arabidopsis thaliana (Mouse-ear cress)).